The primary structure comprises 480 residues: Glycogen synthase (480 aa).

Lys-15 lines the ADP-alpha-D-glucose pocket.

Belongs to the glycosyltransferase 1 family. Bacterial/plant glycogen synthase subfamily.

It carries out the reaction [(1-&gt;4)-alpha-D-glucosyl](n) + ADP-alpha-D-glucose = [(1-&gt;4)-alpha-D-glucosyl](n+1) + ADP + H(+). Its pathway is glycan biosynthesis; glycogen biosynthesis. Its function is as follows. Synthesizes alpha-1,4-glucan chains using ADP-glucose. This is Glycogen synthase from Opitutus terrae (strain DSM 11246 / JCM 15787 / PB90-1).